Here is a 210-residue protein sequence, read N- to C-terminus: Protoporphyrinogen IX oxidase (210 aa).

A run of 5 helical transmembrane segments spans residues 22–42 (WFKA…FYLV), 74–94 (YNII…GLIF), 103–123 (GWLH…FYCG), 141–161 (FRAL…LAVF), and 165–185 (LPLD…AASI). Residue His-27 participates in heme binding. Residue Lys-108 participates in heme binding.

The protein belongs to the HemJ family. In terms of assembly, homodimer. Can also form higher oligomers, most probably tetramers. Interacts with Sll1106, however it is unlikely that Sll1106 is required for PPO function. Heme b is required as a cofactor.

The protein localises to the cell membrane. The enzyme catalyses protoporphyrinogen IX + 3 A = protoporphyrin IX + 3 AH2. It participates in porphyrin-containing compound metabolism; protoporphyrin-IX biosynthesis; protoporphyrin-IX from protoporphyrinogen-IX: step 1/1. Functionally, catalyzes the oxidation of protoporphyrinogen IX to protoporphyrin IX. Is involved in the biosynthesis of tetrapyrrole molecules like heme and chlorophyll. Does not use oxygen or artificial electron acceptors such as menadione or benzoquinone. Is functionally coupled with coproporphyrinogen III oxidase (CPO). Is essential for growth. This is Protoporphyrinogen IX oxidase from Synechocystis sp. (strain ATCC 27184 / PCC 6803 / Kazusa).